We begin with the raw amino-acid sequence, 265 residues long: Undecaprenyl-diphosphatase (265 aa).

7 helical membrane-spanning segments follow: residues 42–62 (EAIP…IVYF), 90–110 (ISFL…LLLF), 115–135 (VEIS…VTGI), 160–182 (VAQG…ALLL), 195–215 (FLMS…MGMV), 222–242 (IVGL…FLKV), and 245–265 (KVDF…TMFL).

It belongs to the UppP family.

Its subcellular location is the cell membrane. The catalysed reaction is di-trans,octa-cis-undecaprenyl diphosphate + H2O = di-trans,octa-cis-undecaprenyl phosphate + phosphate + H(+). Its function is as follows. Catalyzes the dephosphorylation of undecaprenyl diphosphate (UPP). This is Undecaprenyl-diphosphatase from Methanococcoides burtonii (strain DSM 6242 / NBRC 107633 / OCM 468 / ACE-M).